The primary structure comprises 471 residues: Pneumolysin (471 aa).

Beta stranded transmembrane passes span 158-171, 178-187, 256-265, and 273-285; these read MEQL…DFEK, IDFNSVHSGE, SDEVEAAFEA, and APQT…LDNT. Residues 427–437 carry the Conserved undecapeptide motif; it reads ECTGLAWEWWR. A Cholesterol binding motif is present at residues 459 to 460; the sequence is TL.

Belongs to the cholesterol-dependent cytolysin family. As to quaternary structure, elongated monomers align along their lengths, indicating intersubunit contacts and suggesting the prepore structure. Modeling based on cryo-EM shows a homooligomeric pore complex containing 38-44 subunits; when inserted in the host membrane. The size of isolated pores is detergent-dependent; in amphipol A8-35 homogenous rings form with 42 subunits.

The protein localises to the secreted. Its subcellular location is the host cell membrane. Erythrocytes hemolysis is inhibited by cholesterol. Its function is as follows. A cholesterol-dependent toxin that causes cytolysis by forming pores in cholesterol-containing host membranes. After binding to target membranes, the protein undergoes a major conformation change, leading to its insertion in the host membrane and formation of an oligomeric pore complex. Cholesterol is required for binding to host membranes, membrane insertion and pore formation; cholesterol binding is mediated by a Thr-Leu pair in the C-terminus. Can be reversibly inactivated by oxidation. The protein is Pneumolysin (ply) of Streptococcus pneumoniae serotype 2 (strain D39 / NCTC 7466).